The following is a 325-amino-acid chain: NADH-quinone oxidoreductase subunit H (325 aa).

The next 8 membrane-spanning stretches (helical) occupy residues 11 to 31 (VIIAVVKALVILFVVVGCGAF), 81 to 101 (VIFTLAPMIAFTSLLLAMAIV), 114 to 134 (IGLLFFLMMAGLAVYAVLFAG), 154 to 174 (LSYEVFLGLSLMGVVAQAGSF), 186 to 206 (LWNVIPQFLGFLTFCIAGVAV), 237 to 257 (FFVGEYVGIVTVSALIVTLFF), 265 to 285 (LPPVIWFALKTAFFMMMFILI), and 304 to 324 (VCLPLTLLNLLATAAVILYTA).

It belongs to the complex I subunit 1 family. In terms of assembly, NDH-1 is composed of 13 different subunits. Subunits NuoA, H, J, K, L, M, N constitute the membrane sector of the complex.

The protein localises to the cell inner membrane. It carries out the reaction a quinone + NADH + 5 H(+)(in) = a quinol + NAD(+) + 4 H(+)(out). Functionally, NDH-1 shuttles electrons from NADH, via FMN and iron-sulfur (Fe-S) centers, to quinones in the respiratory chain. The immediate electron acceptor for the enzyme in this species is believed to be ubiquinone. Couples the redox reaction to proton translocation (for every two electrons transferred, four hydrogen ions are translocated across the cytoplasmic membrane), and thus conserves the redox energy in a proton gradient. This subunit may bind ubiquinone. The chain is NADH-quinone oxidoreductase subunit H from Erwinia tasmaniensis (strain DSM 17950 / CFBP 7177 / CIP 109463 / NCPPB 4357 / Et1/99).